The chain runs to 103 residues: Histone H4 (103 aa).

A compositionally biased stretch (gly residues) spans 1-14 (MSGRGKGGKGLGKG). A disordered region spans residues 1–20 (MSGRGKGGKGLGKGGAKRHR). Serine 2 is subject to N-acetylserine. N6-acetyl-N6-methyllysine; alternate occurs at positions 6 and 13. Residue lysine 17 is modified to N6-acetyllysine. The DNA-binding element occupies 17 to 21 (KRHRK). Lysine 21 carries the N6-methyllysine modification.

Belongs to the histone H4 family. The nucleosome is a histone octamer containing two molecules each of H2A, H2B, H3 and H4 assembled in one H3-H4 heterotetramer and two H2A-H2B heterodimers. The octamer wraps approximately 147 bp of DNA.

Its subcellular location is the nucleus. It is found in the chromosome. Its function is as follows. Core component of nucleosome. Nucleosomes wrap and compact DNA into chromatin, limiting DNA accessibility to the cellular machineries which require DNA as a template. Histones thereby play a central role in transcription regulation, DNA repair, DNA replication and chromosomal stability. DNA accessibility is regulated via a complex set of post-translational modifications of histones, also called histone code, and nucleosome remodeling. The sequence is that of Histone H4 from Holothuria tubulosa (Tubular sea cucumber).